The following is a 216-amino-acid chain: Probable GTP-binding protein EngB (216 aa).

One can recognise an EngB-type G domain in the interval 30-204 (DGLEVAFAGR…HDVLARWLGL (175 aa)). GTP contacts are provided by residues 38–45 (GRSNAGKS), 64–68 (GRTQL), 82–85 (DLPG), 149–152 (TKAD), and 182–185 (LFSA). S45 and T66 together coordinate Mg(2+).

This sequence belongs to the TRAFAC class TrmE-Era-EngA-EngB-Septin-like GTPase superfamily. EngB GTPase family. The cofactor is Mg(2+).

Necessary for normal cell division and for the maintenance of normal septation. This is Probable GTP-binding protein EngB from Azotobacter vinelandii (strain DJ / ATCC BAA-1303).